Here is a 691-residue protein sequence, read N- to C-terminus: F-box/LRR-repeat protein 5 (691 aa).

The tract at residues 1-159 (MAPFPEEVDV…IKKKVIAQHC (159 aa)) is hemerythrin-like. His15, His57, Glu58, Glu61, His80, His126, and Glu130 together coordinate Fe(3+). The 47-residue stretch at 202–248 (STGITHLPPEVMLSIFSYLNPQELCRCSQVSMKWSQLTKTGSLWKHL) folds into the F-box domain. LRR repeat units lie at residues 340 to 364 (SSAV…LDLT), 365 to 392 (QTDI…DLSG), 393 to 418 (CEKI…QSGF), 479 to 508 (LWML…CVVE), 576 to 607 (TRLP…SLSG), 608 to 635 (CYQI…NLSG), and 636 to 661 (CLTI…YFYY). Residues Cys662, Cys676, Cys686, and Cys687 each contribute to the [2Fe-2S] cluster site.

In terms of assembly, part of a SCF (SKP1-cullin-F-box) protein ligase complex. Interacts with ACO1/IRP1, IREB2/IRP2; the interaction depends on the [2Fe-2S] cluster. Interacts with DCTN1/p150-glued. [2Fe-2S] cluster serves as cofactor. In terms of processing, polybiquitinated upon iron and oxygen depletion, leading to its degradation by the proteasome. Ubiquitination is regulated by the hemerythrin-like region that acts as an oxygen and iron sensor. Undergoes constitutive ubiquitin-dependent degradation at the steady state by HERC2.

The protein localises to the cytoplasm. Its subcellular location is the perinuclear region. The protein resides in the nucleus. It participates in protein modification; protein ubiquitination. An iron-sulfur cluster promotes IRP2 polyubiquitination and degradation in response to both iron and oxygen concentrations. Component of some SCF (SKP1-cullin-F-box) protein ligase complex that plays a central role in iron homeostasis by promoting the ubiquitination and subsequent degradation of IREB2/IRP2. The C-terminal domain of FBXL5 contains a redox-sensitive [2Fe-2S] cluster that, upon oxidation, promotes binding to IRP2 to effect its oxygen-dependent degradation. Under iron deficiency conditions, the N-terminal hemerythrin-like (Hr) region, which contains a diiron metal center, cannot bind iron and undergoes conformational changes that destabilize the FBXL5 protein and cause its ubiquitination and degradation. When intracellular iron levels start rising, the Hr region is stabilized. Additional increases in iron levels facilitate the assembly and incorporation of a redox active [2Fe-2S] cluster in the C-terminal domain. Only when oxygen level is high enough to maintain the cluster in its oxidized state can FBXL5 recruit IRP2 as a substrate for polyubiquination and degradation. Promotes ubiquitination and subsequent degradation of the dynactin complex component DCTN1. Within the nucleus, promotes the ubiquitination of SNAI1; preventing its interaction with DNA and promoting its degradation. Negatively regulates DNA damage response by mediating the ubiquitin-proteasome degradation of the DNA repair protein NABP2. This is F-box/LRR-repeat protein 5 (FBXL5) from Pongo abelii (Sumatran orangutan).